Here is a 584-residue protein sequence, read N- to C-terminus: Methionine--tRNA ligase (584 aa).

Positions 12-22 (PYANGDLHLGH) match the 'HIGH' region motif. 4 residues coordinate Zn(2+): cysteine 144, cysteine 147, cysteine 157, and cysteine 160. Positions 334 to 338 (QFSTS) match the 'KMSKS' region motif. ATP is bound at residue threonine 337. The tract at residues 541 to 563 (EGRDRWAPSELEAGRPLPPPQPL) is disordered.

It belongs to the class-I aminoacyl-tRNA synthetase family. MetG type 1 subfamily. Monomer. Requires Zn(2+) as cofactor.

It is found in the cytoplasm. It carries out the reaction tRNA(Met) + L-methionine + ATP = L-methionyl-tRNA(Met) + AMP + diphosphate. Is required not only for elongation of protein synthesis but also for the initiation of all mRNA translation through initiator tRNA(fMet) aminoacylation. The polypeptide is Methionine--tRNA ligase (Thermomicrobium roseum (strain ATCC 27502 / DSM 5159 / P-2)).